Reading from the N-terminus, the 490-residue chain is Cytochrome P450 2C28 (490 aa).

At Ser127 the chain carries Phosphoserine. An N6-acetyllysine mark is found at Lys249 and Lys375. Cys435 serves as a coordination point for heme.

Belongs to the cytochrome P450 family. Heme is required as a cofactor. In terms of tissue distribution, liver.

It localises to the endoplasmic reticulum membrane. It is found in the microsome membrane. The enzyme catalyses an organic molecule + reduced [NADPH--hemoprotein reductase] + O2 = an alcohol + oxidized [NADPH--hemoprotein reductase] + H2O + H(+). Functionally, catalyzes the N-demethylation of aminopyrine and benzphetamine, but does not catalyze the hydroxylation of tolbutamide, testosterone, and progesterone. This chain is Cytochrome P450 2C28 (CYP2C28), found in Mesocricetus auratus (Golden hamster).